Here is a 534-residue protein sequence, read N- to C-terminus: Bifunctional pantoate ligase/cytidylate kinase (534 aa).

The interval 1-302 (MRLLTTVAAL…LGSTRLIDNT (302 aa)) is pantoate--beta-alanine ligase. 48–55 (MGSLHQGH) contributes to the ATP binding site. Catalysis depends on His-55, which acts as the Proton donor. (R)-pantoate is bound at residue Gln-79. Residue Gln-79 coordinates beta-alanine. Residue 172-175 (GQKD) participates in ATP binding. Gln-178 provides a ligand contact to (R)-pantoate. ATP-binding positions include Val-201 and 209–212 (CSSR). The tract at residues 303-534 (ILRDRQPIIA…DYYQQRLSQW (232 aa)) is cytidylate kinase.

The protein in the N-terminal section; belongs to the pantothenate synthetase family. It in the C-terminal section; belongs to the cytidylate kinase family. Type 1 subfamily.

It localises to the cytoplasm. It carries out the reaction (R)-pantoate + beta-alanine + ATP = (R)-pantothenate + AMP + diphosphate + H(+). The catalysed reaction is CMP + ATP = CDP + ADP. It catalyses the reaction dCMP + ATP = dCDP + ADP. It participates in cofactor biosynthesis; (R)-pantothenate biosynthesis; (R)-pantothenate from (R)-pantoate and beta-alanine: step 1/1. Its function is as follows. Catalyzes the condensation of pantoate with beta-alanine in an ATP-dependent reaction via a pantoyl-adenylate intermediate. Catalyzes the transfer of a phosphate group from ATP to either CMP or dCMP to form CDP or dCDP and ADP, respectively. This Nostoc sp. (strain PCC 7120 / SAG 25.82 / UTEX 2576) protein is Bifunctional pantoate ligase/cytidylate kinase.